The chain runs to 110 residues: Cell division protein FtsB (110 aa).

Topologically, residues 1–3 (MRL) are cytoplasmic. A helical transmembrane segment spans residues 4–21 (IILCLAALVLLIQFPLWL). At 22 to 110 (GKGGWLRVWD…PPKIEPKEKR (89 aa)) the chain is on the periplasmic side. The stretch at 31–64 (DLDQQVIAAQKKNDELRARNAKLNSEVQDLKEGT) forms a coiled coil.

Belongs to the FtsB family. Part of a complex composed of FtsB, FtsL and FtsQ.

It is found in the cell inner membrane. In terms of biological role, essential cell division protein. May link together the upstream cell division proteins, which are predominantly cytoplasmic, with the downstream cell division proteins, which are predominantly periplasmic. The chain is Cell division protein FtsB from Herminiimonas arsenicoxydans.